We begin with the raw amino-acid sequence, 98 residues long: NADH-ubiquinone oxidoreductase chain 4L (98 aa).

The next 3 helical transmembrane spans lie at 1-21 (MPLI…GMLV), 29-49 (SLLC…LMTL), and 58-78 (IVPI…LALL).

This sequence belongs to the complex I subunit 4L family. In terms of assembly, core subunit of respiratory chain NADH dehydrogenase (Complex I) which is composed of 45 different subunits.

The protein localises to the mitochondrion inner membrane. The catalysed reaction is a ubiquinone + NADH + 5 H(+)(in) = a ubiquinol + NAD(+) + 4 H(+)(out). In terms of biological role, core subunit of the mitochondrial membrane respiratory chain NADH dehydrogenase (Complex I) which catalyzes electron transfer from NADH through the respiratory chain, using ubiquinone as an electron acceptor. Part of the enzyme membrane arm which is embedded in the lipid bilayer and involved in proton translocation. This chain is NADH-ubiquinone oxidoreductase chain 4L (MT-ND4L), found in Pan paniscus (Pygmy chimpanzee).